Reading from the N-terminus, the 430-residue chain is Lipoyl synthase, chloroplastic (430 aa).

Positions 1-16 are enriched in polar residues; that stretch reads MRSLATLHQSPASCSR. Residues 1–40 constitute a chloroplast transit peptide; the sequence is MRSLATLHQSPASCSRSAPVAPCPARRANSSRRVARQGPR. Disordered stretches follow at residues 1–55 and 85–119; these read MRSL…SEDV and HLRS…SLGA. Residues 91 to 119 are compositionally biased toward low complexity; it reads KSAAPVSPFAAPSPGSPSASSMLGPSLGA. Positions 155, 160, 166, 183, 187, 190, and 397 each coordinate [4Fe-4S] cluster. In terms of domain architecture, Radical SAM core spans 166–386; it reads CWNGELATAT…KFGQEEIGFR (221 aa).

This sequence belongs to the radical SAM superfamily. Lipoyl synthase family. It depends on [4Fe-4S] cluster as a cofactor.

It is found in the plastid. It localises to the chloroplast. It carries out the reaction [[Fe-S] cluster scaffold protein carrying a second [4Fe-4S](2+) cluster] + N(6)-octanoyl-L-lysyl-[protein] + 2 oxidized [2Fe-2S]-[ferredoxin] + 2 S-adenosyl-L-methionine + 4 H(+) = [[Fe-S] cluster scaffold protein] + N(6)-[(R)-dihydrolipoyl]-L-lysyl-[protein] + 4 Fe(3+) + 2 hydrogen sulfide + 2 5'-deoxyadenosine + 2 L-methionine + 2 reduced [2Fe-2S]-[ferredoxin]. It participates in protein modification; protein lipoylation via endogenous pathway; protein N(6)-(lipoyl)lysine from octanoyl-[acyl-carrier-protein]: step 2/2. Functionally, catalyzes the radical-mediated insertion of two sulfur atoms into the C-6 and C-8 positions of the octanoyl moiety bound to the lipoyl domains of lipoate-dependent enzymes, thereby converting the octanoylated domains into lipoylated derivatives. The sequence is that of Lipoyl synthase, chloroplastic from Chlamydomonas reinhardtii (Chlamydomonas smithii).